Consider the following 203-residue polypeptide: Thymidylate kinase (203 aa).

14-21 (GGEGIGKS) serves as a coordination point for ATP.

It belongs to the thymidylate kinase family.

The enzyme catalyses dTMP + ATP = dTDP + ADP. Phosphorylation of dTMP to form dTDP in both de novo and salvage pathways of dTTP synthesis. The chain is Thymidylate kinase from Rickettsia peacockii (strain Rustic).